A 191-amino-acid chain; its full sequence is Glycerol-3-phosphate acyltransferase (191 aa).

5 consecutive transmembrane segments (helical) span residues 5 to 25 (IVFV…ITKI), 50 to 70 (CIAA…VYIA), 78 to 98 (SFHM…PVWL), 112 to 132 (ILIA…LAVF), and 153 to 173 (SFFF…LIFF).

The protein belongs to the PlsY family. In terms of assembly, probably interacts with PlsX.

It localises to the cell membrane. The catalysed reaction is an acyl phosphate + sn-glycerol 3-phosphate = a 1-acyl-sn-glycero-3-phosphate + phosphate. It participates in lipid metabolism; phospholipid metabolism. Catalyzes the transfer of an acyl group from acyl-phosphate (acyl-PO(4)) to glycerol-3-phosphate (G3P) to form lysophosphatidic acid (LPA). This enzyme utilizes acyl-phosphate as fatty acyl donor, but not acyl-CoA or acyl-ACP. This is Glycerol-3-phosphate acyltransferase from Wolbachia sp. subsp. Brugia malayi (strain TRS).